A 559-amino-acid chain; its full sequence is PHD finger protein 1 (559 aa).

A Tudor domain is found at Pro29–Glu86. 2 PHD-type zinc fingers span residues Glu87–Ala142 and Gln186–Gly240. 2 disordered regions span residues Pro338 to Arg434 and His448 to Ser526. Residues Trp369–Glu386 are compositionally biased toward basic and acidic residues. Composition is skewed to polar residues over residues Asn417–Tyr426 and Pro449–Asp459. Positions Ser481–Pro515 are enriched in low complexity.

It belongs to the Polycomblike family. As to quaternary structure, associated component of the PRC2 complex. Interacts with p53/TP53. Interacts with CHMP1. Testis-specific.

Its subcellular location is the nucleus. It localises to the cytoplasm. The protein localises to the cytoskeleton. It is found in the microtubule organizing center. The protein resides in the centrosome. Polycomb group (PcG) that specifically binds histone H3 trimethylated at 'Lys-36' (H3K36me3) and recruits the PRC2 complex. Involved in DNA damage response and is recruited at double-strand breaks (DSBs). Acts by binding to H3K36me3, a mark for transcriptional activation, and recruiting the PRC2 complex: it is however unclear whether recruitment of the PRC2 complex to H3K36me3 leads to enhance or inhibit H3K27me3 methylation mediated by the PRC2 complex. According to some reports, PRC2 recruitment by PHF1 promotes H3K27me3 and subsequent gene silencing by inducing spreading of PRC2 and H3K27me3 into H3K36me3 loci. According to other reports, PHF1 recruits the PRC2 complex at double-strand breaks (DSBs) and inhibits the activity of PRC2. Regulates p53/TP53 stability and prolonges its turnover: may act by specifically binding to a methylated from of p53/TP53. The sequence is that of PHD finger protein 1 (Phf1) from Mus musculus (Mouse).